Reading from the N-terminus, the 285-residue chain is Bifunctional protein FolD (285 aa).

NADP(+) is bound by residues 165–167 (GRS) and S190.

Belongs to the tetrahydrofolate dehydrogenase/cyclohydrolase family. In terms of assembly, homodimer.

The catalysed reaction is (6R)-5,10-methylene-5,6,7,8-tetrahydrofolate + NADP(+) = (6R)-5,10-methenyltetrahydrofolate + NADPH. The enzyme catalyses (6R)-5,10-methenyltetrahydrofolate + H2O = (6R)-10-formyltetrahydrofolate + H(+). It participates in one-carbon metabolism; tetrahydrofolate interconversion. Its function is as follows. Catalyzes the oxidation of 5,10-methylenetetrahydrofolate to 5,10-methenyltetrahydrofolate and then the hydrolysis of 5,10-methenyltetrahydrofolate to 10-formyltetrahydrofolate. This chain is Bifunctional protein FolD, found in Burkholderia orbicola (strain AU 1054).